The sequence spans 321 residues: Beta-1,3-N-acetylglucosaminyltransferase manic fringe (321 aa).

The Cytoplasmic segment spans residues 1-7 (MQCRLPR). The chain crosses the membrane as a helical; Signal-anchor for type II membrane protein span at residues 8–27 (GLAGALLTLLCMGLLCLRYH). The Lumenal segment spans residues 28–321 (LNLSPQRVQE…TPWCPQLGAR (294 aa)). Substrate is bound at residue Arg70. Asn109 is a glycosylation site (N-linked (GlcNAc...) asparagine). 2 disulfide bridges follow: Cys110–Cys121 and Cys139–Cys202. Substrate is bound at residue Asp143. Asp144 contacts Mn(2+). N-linked (GlcNAc...) asparagine glycosylation occurs at Asn185. Asp232 is a catalytic residue. A Mn(2+)-binding site is contributed by His256. A disulfide bridge links Cys306 with Cys315.

It belongs to the glycosyltransferase 31 family. Requires Mn(2+) as cofactor.

Its subcellular location is the golgi apparatus membrane. It catalyses the reaction 3-O-(alpha-L-fucosyl)-L-threonyl-[EGF-like domain protein] + UDP-N-acetyl-alpha-D-glucosamine = 3-O-(N-acetyl-beta-D-glucosaminyl-(1-&gt;3)-alpha-L-fucosyl)-L-threonyl-[EGF-like domain protein] + UDP + H(+). The catalysed reaction is 3-O-(alpha-L-fucosyl)-L-seryl-[EGF-like domain protein] + UDP-N-acetyl-alpha-D-glucosamine = 3-O-(N-acetyl-beta-D-glucosaminyl-(1-&gt;3)-alpha-L-fucosyl)-L-seryl-[EGF-like domain protein] + UDP + H(+). Glycosyltransferase that initiates the elongation of O-linked fucose residues attached to EGF-like repeats in the extracellular domain of Notch molecules. Modulates NOTCH1 activity by modifying O-fucose residues at specific EGF-like domains resulting in inhibition of NOTCH1 activation by JAG1 and enhancement of NOTCH1 activation by DLL1 via an increase in its binding to DLL1. This is Beta-1,3-N-acetylglucosaminyltransferase manic fringe (MFNG) from Pan troglodytes (Chimpanzee).